Consider the following 615-residue polypeptide: 1-deoxy-D-xylulose-5-phosphate synthase (615 aa).

Residues His-72 and 111-113 (GHS) each bind thiamine diphosphate. Asp-142 provides a ligand contact to Mg(2+). Residues 143 to 144 (GA), Asn-171, Tyr-278, and Glu-360 each bind thiamine diphosphate. Asn-171 contacts Mg(2+).

It belongs to the transketolase family. DXPS subfamily. As to quaternary structure, homodimer. The cofactor is Mg(2+). Thiamine diphosphate is required as a cofactor.

The catalysed reaction is D-glyceraldehyde 3-phosphate + pyruvate + H(+) = 1-deoxy-D-xylulose 5-phosphate + CO2. It participates in metabolic intermediate biosynthesis; 1-deoxy-D-xylulose 5-phosphate biosynthesis; 1-deoxy-D-xylulose 5-phosphate from D-glyceraldehyde 3-phosphate and pyruvate: step 1/1. Catalyzes the acyloin condensation reaction between C atoms 2 and 3 of pyruvate and glyceraldehyde 3-phosphate to yield 1-deoxy-D-xylulose-5-phosphate (DXP). The sequence is that of 1-deoxy-D-xylulose-5-phosphate synthase from Campylobacter jejuni (strain RM1221).